The chain runs to 511 residues: 2,3-bisphosphoglycerate-independent phosphoglycerate mutase (511 aa).

Mn(2+)-binding residues include Asp14 and Ser64. The Phosphoserine intermediate role is filled by Ser64. Residues His125, 155–156 (RD), Arg187, Arg193, 259–262 (RADR), and Lys333 each bind substrate. Residues Asp400, His404, Asp441, His442, and His460 each contribute to the Mn(2+) site.

Belongs to the BPG-independent phosphoglycerate mutase family. As to quaternary structure, monomer. Mn(2+) serves as cofactor.

The enzyme catalyses (2R)-2-phosphoglycerate = (2R)-3-phosphoglycerate. The protein operates within carbohydrate degradation; glycolysis; pyruvate from D-glyceraldehyde 3-phosphate: step 3/5. Its function is as follows. Catalyzes the interconversion of 2-phosphoglycerate and 3-phosphoglycerate. This is 2,3-bisphosphoglycerate-independent phosphoglycerate mutase from Idiomarina loihiensis (strain ATCC BAA-735 / DSM 15497 / L2-TR).